The chain runs to 284 residues: Bifunctional protein FolD (284 aa).

NADP(+)-binding positions include 164–166 (GTS) and Ile230.

The protein belongs to the tetrahydrofolate dehydrogenase/cyclohydrolase family. In terms of assembly, homodimer.

It carries out the reaction (6R)-5,10-methylene-5,6,7,8-tetrahydrofolate + NADP(+) = (6R)-5,10-methenyltetrahydrofolate + NADPH. It catalyses the reaction (6R)-5,10-methenyltetrahydrofolate + H2O = (6R)-10-formyltetrahydrofolate + H(+). It functions in the pathway one-carbon metabolism; tetrahydrofolate interconversion. Its function is as follows. Catalyzes the oxidation of 5,10-methylenetetrahydrofolate to 5,10-methenyltetrahydrofolate and then the hydrolysis of 5,10-methenyltetrahydrofolate to 10-formyltetrahydrofolate. The sequence is that of Bifunctional protein FolD from Mycoplasma capricolum subsp. capricolum (strain California kid / ATCC 27343 / NCTC 10154).